The following is a 351-amino-acid chain: S-adenosylmethionine:tRNA ribosyltransferase-isomerase (351 aa).

The protein belongs to the QueA family. Monomer.

Its subcellular location is the cytoplasm. It carries out the reaction 7-aminomethyl-7-carbaguanosine(34) in tRNA + S-adenosyl-L-methionine = epoxyqueuosine(34) in tRNA + adenine + L-methionine + 2 H(+). The protein operates within tRNA modification; tRNA-queuosine biosynthesis. Transfers and isomerizes the ribose moiety from AdoMet to the 7-aminomethyl group of 7-deazaguanine (preQ1-tRNA) to give epoxyqueuosine (oQ-tRNA). This chain is S-adenosylmethionine:tRNA ribosyltransferase-isomerase, found in Acinetobacter baumannii (strain SDF).